A 182-amino-acid chain; its full sequence is UPF0397 protein BCQ_2505 (182 aa).

5 helical membrane-spanning segments follow: residues 9–29 (VVAIGIGAALYGILGLWGFSI), 40–60 (AILTVFGALFGPVAGLLIGLI), 71–91 (WGIWWGWVISSGIIGFAMGFI), 114–134 (ITGLIGIVIAIIFAGAFDIIV), and 142–162 (IVIQVLGATIADVIVFLVLGL).

The protein belongs to the UPF0397 family.

It is found in the cell membrane. In Bacillus cereus (strain Q1), this protein is UPF0397 protein BCQ_2505.